Consider the following 322-residue polypeptide: Succinate/fumarate mitochondrial transporter (322 aa).

Solcar repeat units lie at residues 8 to 99, 111 to 202, and 212 to 303; these read SHPA…YRTL, GNTF…LKEF, and LPSW…VREH. 6 helical membrane-spanning segments follow: residues 11–31, 68–88, 114–134, 177–193, 219–235, and 278–295; these read AINL…CHPL, FLAL…KMAI, FVAG…PMEV, GVSL…GANF, CIGL…NAPL, and GITP…VTFT.

It belongs to the mitochondrial carrier (TC 2.A.29) family.

It is found in the mitochondrion inner membrane. Transports cytoplasmic succinate, derived from isocitrate by the action of isocitrate lyase in the cytosol, into the mitochondrial matrix in exchange for fumarate. The sequence is that of Succinate/fumarate mitochondrial transporter (SFC1) from Saccharomyces cerevisiae (strain ATCC 204508 / S288c) (Baker's yeast).